A 419-amino-acid chain; its full sequence is Isocitrate dehydrogenase [NADP] (419 aa).

Residue Thr102 coordinates NADP(+). Ser111, Asn113, Arg117, Arg127, and Arg151 together coordinate D-threo-isocitrate. Asp306 is a Mg(2+) binding site. Residues 338–344 (HGSAPKY), Asn351, Tyr390, and Arg394 each bind NADP(+).

This sequence belongs to the isocitrate and isopropylmalate dehydrogenases family. In terms of assembly, homodimer. Requires Mg(2+) as cofactor. Mn(2+) serves as cofactor.

The catalysed reaction is D-threo-isocitrate + NADP(+) = 2-oxoglutarate + CO2 + NADPH. In terms of biological role, catalyzes the oxidative decarboxylation of isocitrate to 2-oxoglutarate and carbon dioxide with the concomitant reduction of NADP(+). This chain is Isocitrate dehydrogenase [NADP], found in Haloferax volcanii (strain ATCC 29605 / DSM 3757 / JCM 8879 / NBRC 14742 / NCIMB 2012 / VKM B-1768 / DS2) (Halobacterium volcanii).